The chain runs to 385 residues: MNNPLLAIQSQYWAVRDYLSPVLRESKFKEHGRITPEEFVAAGDFLTFKFPVWQWEKGESSRARDFLPPDKQYLVTRNVPCLRRATAVDYTNADEDAEKLLSFLDDAEEAPGPDDDWVATHINRSPPHRPTDMDEIPDIPDSPTTAPTREMAGLNVSSGGKLEEDEIPDIDDIPDMDEEGLEDLEDDAAVRIVHPSEAEVNSTAGKNLLQVRTYDCIISYDKHYQTPRFWLFGYDEHKNPLTPAQVFQDVPADHAFKTMTMESFPHSGAQLASVHPCKHASVMKKFIDRMEAAQGPAPTAEPETISSTSGTSGSAGGKEEKEKKKKWGLGSMVRKVTGGSVPKVEKDKDEVVTGVPVDFYLVIFLKFIASIVPTIEVDSTTSTAL.

The interval 88-208 is flexible region; sequence VDYTNADEDA…EVNSTAGKNL (121 aa). A disordered region spans residues 126 to 169; sequence PPHRPTDMDEIPDIPDSPTTAPTREMAGLNVSSGGKLEEDEIPD. The Glycyl thioester intermediate role is filled by C277. A handle region region spans residues 281–359; it reads SVMKKFIDRM…EVVTGVPVDF (79 aa). Residues 292–329 are disordered; that stretch reads AAQGPAPTAEPETISSTSGTSGSAGGKEEKEKKKKWGL. Over residues 303–312 the composition is skewed to low complexity; sequence ETISSTSGTS.

It belongs to the ATG3 family. Monomer. Interacts with ATG8 through an intermediate thioester bond through the C-terminal Gly of ATG8. Also interacts with the 40 amino acid C-terminal region of the E1-like ATG7 enzyme. Also interacts with the ATG12-ATG5 conjugate.

Its subcellular location is the cytoplasm. Its function is as follows. E2 conjugating enzyme required for the cytoplasm to vacuole transport (Cvt) and autophagy. Required for selective autophagic degradation of the nucleus (nucleophagy) as well as for mitophagy which contributes to regulate mitochondrial quantity and quality by eliminating the mitochondria to a basal level to fulfill cellular energy requirements and preventing excess ROS production. Responsible for the E2-like covalent binding of phosphatidylethanolamine to the C-terminal Gly of ATG8. The ATG12-ATG5 conjugate plays a role of an E3 and promotes the transfer of ATG8 from ATG3 to phosphatidylethanolamine (PE). This step is required for the membrane association of ATG8. The formation of the ATG8-phosphatidylethanolamine conjugate is essential for autophagy and for the cytoplasm to vacuole transport (Cvt). The ATG8-PE conjugate mediates tethering between adjacent membranes and stimulates membrane hemifusion, leading to expansion of the autophagosomal membrane during autophagy. The protein is Autophagy-related protein 3 (ATG3) of Cryptococcus neoformans var. neoformans serotype D (strain B-3501A) (Filobasidiella neoformans).